The following is a 131-amino-acid chain: Glycine cleavage system H protein (131 aa).

Residues Arg-24–Glu-106 form the Lipoyl-binding domain. At Lys-65 the chain carries N6-lipoyllysine.

This sequence belongs to the GcvH family. In terms of assembly, the glycine cleavage system is composed of four proteins: P, T, L and H. It depends on (R)-lipoate as a cofactor.

In terms of biological role, the glycine cleavage system catalyzes the degradation of glycine. The H protein shuttles the methylamine group of glycine from the P protein to the T protein. The polypeptide is Glycine cleavage system H protein (Xanthomonas oryzae pv. oryzae (strain MAFF 311018)).